The primary structure comprises 211 residues: MAVSAIIVGLGNPGPRYAATRHNFGFMVLDALMERARQLGGAPKATLTGRKDLEAVTLSLPVLPGGAFAQFACVKPLTFMNLSGRAVRAALDFYKLAPTDVFVLHDELDLPLGRMRLKRGGGNAGHNGLKSINQELGSPEFVRLRLGIGRPEGRDVAGYVLEAFRGDETPVVRQVVPAAVDGIMAFFEDGLETAQRRVGGFDAVPPPLPQP.

TRNA is bound at residue Tyr-17. His-22 (proton acceptor) is an active-site residue. TRNA-binding residues include Phe-79, Asn-81, and Asn-127.

Belongs to the PTH family. Monomer.

The protein resides in the cytoplasm. The enzyme catalyses an N-acyl-L-alpha-aminoacyl-tRNA + H2O = an N-acyl-L-amino acid + a tRNA + H(+). In terms of biological role, hydrolyzes ribosome-free peptidyl-tRNAs (with 1 or more amino acids incorporated), which drop off the ribosome during protein synthesis, or as a result of ribosome stalling. Catalyzes the release of premature peptidyl moieties from peptidyl-tRNA molecules trapped in stalled 50S ribosomal subunits, and thus maintains levels of free tRNAs and 50S ribosomes. The protein is Peptidyl-tRNA hydrolase of Solidesulfovibrio magneticus (strain ATCC 700980 / DSM 13731 / RS-1) (Desulfovibrio magneticus).